A 362-amino-acid polypeptide reads, in one-letter code: Peptide chain release factor 1 (362 aa).

Residue Q237 is modified to N5-methylglutamine. A compositionally biased stretch (basic and acidic residues) spans 284-295; sequence EEEKRQAEETST. The disordered stretch occupies residues 284 to 304; that stretch reads EEEKRQAEETSTRRNLVASGD.

It belongs to the prokaryotic/mitochondrial release factor family. Methylated by PrmC. Methylation increases the termination efficiency of RF1.

Its subcellular location is the cytoplasm. Functionally, peptide chain release factor 1 directs the termination of translation in response to the peptide chain termination codons UAG and UAA. The protein is Peptide chain release factor 1 of Pseudoalteromonas atlantica (strain T6c / ATCC BAA-1087).